An 806-amino-acid chain; its full sequence is Glycerol-3-phosphate acyltransferase (806 aa).

The short motif at 305–310 (CHRSHM) is the HXXXXD motif element.

The protein belongs to the GPAT/DAPAT family.

It is found in the cell inner membrane. It carries out the reaction sn-glycerol 3-phosphate + an acyl-CoA = a 1-acyl-sn-glycero-3-phosphate + CoA. Its pathway is phospholipid metabolism; CDP-diacylglycerol biosynthesis; CDP-diacylglycerol from sn-glycerol 3-phosphate: step 1/3. This chain is Glycerol-3-phosphate acyltransferase, found in Escherichia fergusonii (strain ATCC 35469 / DSM 13698 / CCUG 18766 / IAM 14443 / JCM 21226 / LMG 7866 / NBRC 102419 / NCTC 12128 / CDC 0568-73).